A 460-amino-acid polypeptide reads, in one-letter code: Cysteine--tRNA ligase (460 aa).

C29 serves as a coordination point for Zn(2+). Positions 31–41 match the 'HIGH' region motif; it reads MTIYDLCHIGH. Residues C213, H238, and E242 each contribute to the Zn(2+) site. Residues 270 to 274 carry the 'KMSKS' region motif; the sequence is KMSKS. K273 is a binding site for ATP.

The protein belongs to the class-I aminoacyl-tRNA synthetase family. As to quaternary structure, monomer. It depends on Zn(2+) as a cofactor.

Its subcellular location is the cytoplasm. The catalysed reaction is tRNA(Cys) + L-cysteine + ATP = L-cysteinyl-tRNA(Cys) + AMP + diphosphate. The protein is Cysteine--tRNA ligase of Verminephrobacter eiseniae (strain EF01-2).